Consider the following 439-residue polypeptide: Type I secretion system membrane fusion protein PrsE (439 aa).

A helical membrane pass occupies residues 20–40 (LIGVSVLALALVAGVGGWAAT).

The protein belongs to the membrane fusion protein (MFP) (TC 8.A.1) family. In terms of assembly, part of a type I secretion system composed of PrsD and PrsE.

The protein localises to the cell inner membrane. Its function is as follows. Mediates secretion of glycanase ExsH. The sequence is that of Type I secretion system membrane fusion protein PrsE (prsE) from Rhizobium meliloti (strain 1021) (Ensifer meliloti).